An 829-amino-acid chain; its full sequence is Periplasmic nitrate reductase (829 aa).

The tat-type signal signal peptide spans 1 to 30 (MKLSRRDFMKANAVAAAAAVAGVSAPTLAA). The 4Fe-4S Mo/W bis-MGD-type domain occupies 41-97 (IKWDKAPCRFCGTGCSVLVGSQDGRVVATQGDPDAPVNRGLNCIKGYFLSKIMYGED). [4Fe-4S] cluster-binding residues include Cys48, Cys51, Cys55, and Cys83. Mo-bis(molybdopterin guanine dinucleotide) contacts are provided by residues Lys85, Gln152, Asn177, Cys181, 214–221 (WGSNMAEM), 245–249 (STFEH), 264–266 (QTD), Met374, Gln378, Asn484, 510–511 (SD), Lys533, Asp560, and 719–728 (TGRVLEHWHT). A substrate-binding site is contributed by Phe795. Residues Asn803 and Lys820 each coordinate Mo-bis(molybdopterin guanine dinucleotide).

Belongs to the prokaryotic molybdopterin-containing oxidoreductase family. NasA/NapA/NarB subfamily. In terms of assembly, component of the periplasmic nitrate reductase NapAB complex composed of NapA and NapB. The cofactor is [4Fe-4S] cluster. It depends on Mo-bis(molybdopterin guanine dinucleotide) as a cofactor. In terms of processing, predicted to be exported by the Tat system. The position of the signal peptide cleavage has not been experimentally proven.

It is found in the periplasm. It catalyses the reaction 2 Fe(II)-[cytochrome] + nitrate + 2 H(+) = 2 Fe(III)-[cytochrome] + nitrite + H2O. Catalytic subunit of the periplasmic nitrate reductase complex NapAB. Receives electrons from NapB and catalyzes the reduction of nitrate to nitrite. The sequence is that of Periplasmic nitrate reductase from Aeromonas salmonicida (strain A449).